The chain runs to 65 residues: Large ribosomal subunit protein bL35 (65 aa).

Residues methionine 1–alanine 10 are compositionally biased toward basic residues. Positions methionine 1–threonine 21 are disordered.

This sequence belongs to the bacterial ribosomal protein bL35 family.

This Polynucleobacter necessarius subsp. necessarius (strain STIR1) protein is Large ribosomal subunit protein bL35.